Here is a 179-residue protein sequence, read N- to C-terminus: Lebocin-1/2 (179 aa).

An N-terminal signal peptide occupies residues 1 to 16 (MYKFLVFSSVLVLFFA). Positions 17-120 (QASCQRFIQP…QPIESHRNTR (104 aa)) are excised as a propeptide. The interval 93 to 116 (NNEASIEHSHHTVDTGLDQPIESH) is disordered. Residue Thr-135 is glycosylated (O-linked (GalNAc...) threonine). The propeptide occupies 153–179 (RRHASDDQEELRQYNEHFLIPRDIFQE).

It belongs to the lebocin family. In terms of processing, O-glycosylation is important for the antibacterial activity of lebocin, O-linked glycan structure is a disaccharide (Gal-GalNAc) in case of lebocin 1 and a monosaccharide (GalNAc) in case of lebocin 2. Hemolymph. Produced in fat body.

It localises to the secreted. Its function is as follows. Antibacterial peptide. This Bombyx mori (Silk moth) protein is Lebocin-1/2.